A 291-amino-acid chain; its full sequence is Small ribosomal subunit biogenesis GTPase RsgA 1 (291 aa).

A CP-type G domain is found at 63–221 (ENALVRPPVA…VADTPGFSSI (159 aa)). GTP contacts are provided by residues 112 to 115 (SKMD) and 164 to 172 (GQSGVGKST). Residues C245, C250, H252, and C258 each coordinate Zn(2+).

It belongs to the TRAFAC class YlqF/YawG GTPase family. RsgA subfamily. In terms of assembly, monomer. Associates with 30S ribosomal subunit, binds 16S rRNA. It depends on Zn(2+) as a cofactor.

It is found in the cytoplasm. Functionally, one of several proteins that assist in the late maturation steps of the functional core of the 30S ribosomal subunit. Helps release RbfA from mature subunits. May play a role in the assembly of ribosomal proteins into the subunit. Circularly permuted GTPase that catalyzes slow GTP hydrolysis, GTPase activity is stimulated by the 30S ribosomal subunit. This is Small ribosomal subunit biogenesis GTPase RsgA 1 from Listeria monocytogenes serotype 4b (strain F2365).